The sequence spans 356 residues: 3-dehydroquinate synthase (356 aa).

Residues 69-74 (DGEKFK), 103-107 (GVIGD), 127-128 (TT), lysine 140, lysine 149, and 167-170 (CLKT) contribute to the NAD(+) site. Glutamate 182, histidine 245, and histidine 262 together coordinate Zn(2+).

Belongs to the sugar phosphate cyclases superfamily. Dehydroquinate synthase family. Co(2+) is required as a cofactor. The cofactor is Zn(2+). Requires NAD(+) as cofactor.

The protein localises to the cytoplasm. It carries out the reaction 7-phospho-2-dehydro-3-deoxy-D-arabino-heptonate = 3-dehydroquinate + phosphate. It participates in metabolic intermediate biosynthesis; chorismate biosynthesis; chorismate from D-erythrose 4-phosphate and phosphoenolpyruvate: step 2/7. In terms of biological role, catalyzes the conversion of 3-deoxy-D-arabino-heptulosonate 7-phosphate (DAHP) to dehydroquinate (DHQ). This is 3-dehydroquinate synthase from Psychromonas ingrahamii (strain DSM 17664 / CCUG 51855 / 37).